The sequence spans 318 residues: Methionyl-tRNA formyltransferase (318 aa).

(6S)-5,6,7,8-tetrahydrofolate is bound at residue 111–114 (SLLP).

This sequence belongs to the Fmt family.

The catalysed reaction is L-methionyl-tRNA(fMet) + (6R)-10-formyltetrahydrofolate = N-formyl-L-methionyl-tRNA(fMet) + (6S)-5,6,7,8-tetrahydrofolate + H(+). Its function is as follows. Attaches a formyl group to the free amino group of methionyl-tRNA(fMet). The formyl group appears to play a dual role in the initiator identity of N-formylmethionyl-tRNA by promoting its recognition by IF2 and preventing the misappropriation of this tRNA by the elongation apparatus. The protein is Methionyl-tRNA formyltransferase of Chlorobium limicola (strain DSM 245 / NBRC 103803 / 6330).